Consider the following 639-residue polypeptide: MLHNTTDNVENNQTIKASTFDSEAFLRVVTEQAGVYRMYDSKQVVIYVGKAKQLKKRLASYFRKDVGSVKTQVLVKQIAAIEVTVTHTEGEALILENNYIKKYQPKYNILLRDDKSYPYLLITAHKHPKLGLHRGGKKVKGEYFGPFPTVGAVWESLRLMQKIFPIRQCEDSYYRARSRPCLQHQLGRCSAPCVDKISVDDYKEQVNLAKLFLQGKSSAVIEQLVARMELASNELHFELAAKYRDQIVTLRKVQQQQHVSGHVAELDVVGLYRDKTQVCIHLLFIRQHKILGSKSYFPTVPSESSDSEILQAFIAQHYLSNEMLSHGKVQSSIPKEIVIKESIEQVVELARLLSEQAEYDVKISTNTRSERAQYLKLAGTNAHTALVTRNSHKESMQARFVALNEVFELENGIQRIECFDISHTMGQQTVASNVVFNQEGPLKTDYRRYNVFGITPGDDYAAMAFALNKRYGKLKANPIKPEEHGALEKLPDIVFIDGGKGQLAKAEEFFSQLALTRTPLLVGVAKGESRKPGLETLILAGSHQLISLPATSPALHLVQHIRDESHRFAITGHRAKRQKVSKKSRLESIEGIGAKKRQSLLTFLGGLQEVMQADITALAKVPGISHVLAEKIHNALHDK.

The GIY-YIG domain maps to 31–109 (EQAGVYRMYD…IKKYQPKYNI (79 aa)). Positions 218 to 253 (SAVIEQLVARMELASNELHFELAAKYRDQIVTLRKV) constitute a UVR domain.

Belongs to the UvrC family. As to quaternary structure, interacts with UvrB in an incision complex.

The protein localises to the cytoplasm. Functionally, the UvrABC repair system catalyzes the recognition and processing of DNA lesions. UvrC both incises the 5' and 3' sides of the lesion. The N-terminal half is responsible for the 3' incision and the C-terminal half is responsible for the 5' incision. This chain is UvrABC system protein C, found in Colwellia psychrerythraea (strain 34H / ATCC BAA-681) (Vibrio psychroerythus).